The sequence spans 280 residues: Ribonuclease Z (280 aa).

7 residues coordinate Zn(2+): His61, His63, Asp65, His66, His153, Asp176, and His240. The Proton acceptor role is filled by Asp65.

It belongs to the RNase Z family. In terms of assembly, homodimer. Zn(2+) serves as cofactor.

The enzyme catalyses Endonucleolytic cleavage of RNA, removing extra 3' nucleotides from tRNA precursor, generating 3' termini of tRNAs. A 3'-hydroxy group is left at the tRNA terminus and a 5'-phosphoryl group is left at the trailer molecule.. Zinc phosphodiesterase, which displays some tRNA 3'-processing endonuclease activity. Probably involved in tRNA maturation, by removing a 3'-trailer from precursor tRNA. In Mycobacterium avium (strain 104), this protein is Ribonuclease Z.